A 51-amino-acid chain; its full sequence is Large ribosomal subunit protein bL33 (51 aa).

Positions 1 to 23 (MRDKIKLESSAGTGHFYTTTKNK) are disordered. Positions 10–20 (SAGTGHFYTTT) are enriched in polar residues.

Belongs to the bacterial ribosomal protein bL33 family.

This chain is Large ribosomal subunit protein bL33, found in Chromobacterium violaceum (strain ATCC 12472 / DSM 30191 / JCM 1249 / CCUG 213 / NBRC 12614 / NCIMB 9131 / NCTC 9757 / MK).